Reading from the N-terminus, the 405-residue chain is L-carnitine CoA-transferase (405 aa).

2 residues coordinate CoA: Lys97 and Arg104. Residue Asp169 is the Nucleophile of the active site.

The protein belongs to the CoA-transferase III family. CaiB subfamily. As to quaternary structure, homodimer.

It is found in the cytoplasm. The enzyme catalyses crotonobetainyl-CoA + (R)-carnitine = crotonobetaine + (R)-carnitinyl-CoA. The catalysed reaction is 4-(trimethylamino)butanoyl-CoA + (R)-carnitine = (R)-carnitinyl-CoA + 4-(trimethylamino)butanoate. The protein operates within amine and polyamine metabolism; carnitine metabolism. Catalyzes the reversible transfer of the CoA moiety from gamma-butyrobetainyl-CoA to L-carnitine to generate L-carnitinyl-CoA and gamma-butyrobetaine. Is also able to catalyze the reversible transfer of the CoA moiety from gamma-butyrobetainyl-CoA or L-carnitinyl-CoA to crotonobetaine to generate crotonobetainyl-CoA. The protein is L-carnitine CoA-transferase of Salmonella choleraesuis (strain SC-B67).